A 238-amino-acid chain; its full sequence is VIGGDECNINEHNFLVALYEYWSQSFLCGGTLINGEWVLTAAHCDRKHILIYVGVHDRSVQFDKEQRRFPKEKYFFNCRNNFTKWDKDIMLIRLNKPVSYSEHIAPLSLPSSPPIVGSVCRVMGWGTIKSPQETLPDVPHCANINLLDYEVCRTAHPQFRLPATIRILCAGVLEGGIDTCHRDSGGPLICNGEFQGIVSWGDGSCAQPDKPALYSKVFDHLDWIQNIIAGSETVNCPS.

Residues 1–229 (VIGGDECNIN…HLDWIQNIIA (229 aa)) enclose the Peptidase S1 domain. Cystine bridges form between Cys-7/Cys-141, Cys-28/Cys-44, Cys-78/Cys-236, Cys-120/Cys-190, Cys-152/Cys-169, and Cys-180/Cys-205. Catalysis depends on charge relay system residues His-43 and Asp-88. Ser-184 serves as the catalytic Charge relay system.

The protein belongs to the peptidase S1 family. Snake venom subfamily. Monomer. Expressed by the venom gland.

The protein localises to the secreted. With respect to regulation, inhibited by Cu(2+) and, to a lesser extent, by Zn(2+) and Ba(2+). Not inhibited by Ca(2+) and Mg(2+). In terms of biological role, thrombin-like snake venom serine protease. Releases fibrinopeptide A and B in the conversion of fibrinogen to fibrin, with preferential activity on the alpha chain of fibrinogen. Also hydrolyzes N-p-toluensulfonyl arginine ester (TAME) and chromogenic artificial substrates of the blood coagulation cascade: S-2222 for factor Xa, S-2302 for kallikrein and S-2238 for thrombin. When tested in vitro, the recombinant protein does not degrade blood clots, suggesting that this toxin lacks fibrinolytic activity. In addition, it moderately inhibits human Kv10.1/KCNH1/EAG1 currents, with a mechanism independent of its enzymatic activity. It selectively blocks Kv10.1/KCNH1/EAG1 in a time and dose-dependent manner (IC(50)=4.2 uM for native protein and IC(50)=2.5 uM for recombinant protein). It may have a preference in interacting with Kv10.1/KCNH1/EAG1 in its closed state, since the inhibitory effect of the toxin is decreased at more depolarized potentials. Corroboratively, it may have possible antitumor applications, since it reduces the viability of human breast cancer cell line MCF-7, which strongly expresses Kv10.1/KCNH1/EAG1, but does not affect the liver carcinoma and the non-tumorigenic epithelial breast cell lines, which weakly express Kv10.1/KCNH1/EAG1. When tested on peripheral blood mononuclear cells (PBMC), the native protein shows mild cytotoxicity, whereas the recombinant protein does not show any cytotoxicity. Native form is not immununogenic, since it does not induce statistically significant antibody production in mice, whereas recombinant form shows an antibody titer slightly higher than the native form. In vivo, subplantar injection in mice paw induces a discreet paw edema. In addition, intraperitoneal injection of the recombinant protein into mice led to fibrinogen depletion, resulting in the blood incoagulability. The sequence is that of Thrombin-like enzyme collinein-1 from Crotalus durissus collilineatus (Brazilian rattlesnake).